A 388-amino-acid polypeptide reads, in one-letter code: S-adenosylmethionine synthase (388 aa).

His17 provides a ligand contact to ATP. Asp19 is a Mg(2+) binding site. Residue Glu45 participates in K(+) binding. L-methionine contacts are provided by Glu58 and Gln102. Residues Gln102 to Ala112 form a flexible loop region. Residues Asp167–Lys169, Arg232–Phe233, Asp241, Arg247–Lys248, Ala264, and Lys268 contribute to the ATP site. L-methionine is bound at residue Asp241. Lys272 is an L-methionine binding site.

It belongs to the AdoMet synthase family. Homotetramer; dimer of dimers. The cofactor is Mg(2+). K(+) serves as cofactor.

Its subcellular location is the cytoplasm. It catalyses the reaction L-methionine + ATP + H2O = S-adenosyl-L-methionine + phosphate + diphosphate. It functions in the pathway amino-acid biosynthesis; S-adenosyl-L-methionine biosynthesis; S-adenosyl-L-methionine from L-methionine: step 1/1. Its function is as follows. Catalyzes the formation of S-adenosylmethionine (AdoMet) from methionine and ATP. The overall synthetic reaction is composed of two sequential steps, AdoMet formation and the subsequent tripolyphosphate hydrolysis which occurs prior to release of AdoMet from the enzyme. This chain is S-adenosylmethionine synthase, found in Paramagnetospirillum magneticum (strain ATCC 700264 / AMB-1) (Magnetospirillum magneticum).